A 465-amino-acid chain; its full sequence is Catalase cnsD (465 aa).

The active site involves His-39. Residue Tyr-331 coordinates heme.

It belongs to the catalase family. Heme is required as a cofactor.

The protein operates within alkaloid biosynthesis. Catalase; part of the gene cluster that mediates the biosynthesis of communesins, a prominent class of indole alkaloids with great potential as pharmaceuticals. Communesins are biosynthesized by the coupling of tryptamine and aurantioclavine, two building blocks derived from L-tryptophan. The L-tryptophan decarboxylase cnsB converts L-tryptophan to tryptamine, whereas the tryptophan dimethylallyltransferase cnsF converts L-tryptophan to 4-dimethylallyl tryptophan which is further transformed to aurantioclavine by the aurantioclavine synthase cnsA, probably aided by the catalase cnsD. The cytochrome P450 monooxygenase cnsC catalyzes the heterodimeric coupling between the two different indole moieties, tryptamine and aurantioclavine, to construct vicinal quaternary stereocenters and yield the heptacyclic communesin scaffold. The O-methyltransferase cnsE then methylates the communesin scaffold to produce communesin K, the simplest characterized communesin that contains the heptacyclic core. The dioxygenase cnsJ converts communesin K into communesin I. Acylation to introduce the hexadienyl group at position N16 of communesin I by the acyltransferase cnsK leads to the production of communesin B. The hexadienyl group is produced by the highly reducing polyketide synthase cnsI, before being hydrolytically removed from cnsI by the serine hydrolase cnsH, converted into hexadienyl-CoA by the CoA ligase cnsG, and then transferred to communesin I by cnsK. Surprisingly, cnsK may also be a promiscuous acyltransferase that can tolerate a range of acyl groups, including acetyl-, propionyl-, and butyryl-CoA, which lead to communesins A, G and H respectively. The roles of the alpha-ketoglutarate-dependent dioxygenases cnsM and cnsP have still to be determined. The sequence is that of Catalase cnsD from Penicillium expansum (Blue mold rot fungus).